The primary structure comprises 548 residues: Chaperonin GroEL (548 aa).

ATP contacts are provided by residues 30–33, K51, 87–91, G415, and D496; these read TLGP and DGTTT.

This sequence belongs to the chaperonin (HSP60) family. In terms of assembly, forms a cylinder of 14 subunits composed of two heptameric rings stacked back-to-back. Interacts with the co-chaperonin GroES.

It localises to the cytoplasm. It carries out the reaction ATP + H2O + a folded polypeptide = ADP + phosphate + an unfolded polypeptide.. Together with its co-chaperonin GroES, plays an essential role in assisting protein folding. The GroEL-GroES system forms a nano-cage that allows encapsulation of the non-native substrate proteins and provides a physical environment optimized to promote and accelerate protein folding. The protein is Chaperonin GroEL of Haemophilus influenzae (strain ATCC 51907 / DSM 11121 / KW20 / Rd).